The chain runs to 292 residues: Transcription factor HFR1 (292 aa).

Residues 114-153 (KRRIQVLSSDDESEEFTREVPSVTRKGSKRRRRDEKMSNK) are disordered. Positions 134–147 (PSVTRKGSKRRRRD) are basic motif; degenerate. The bHLH domain maps to 134–183 (PSVTRKGSKRRRRDEKMSNKMRKLQQLVPNCHKTDKVSVLDKTIEYMKNL). The segment covering 139–153 (KGSKRRRRDEKMSNK) has biased composition (basic residues). The Nuclear localization signal motif lies at 141–148 (SKRRRRDE). The interval 148–183 (EKMSNKMRKLQQLVPNCHKTDKVSVLDKTIEYMKNL) is helix-loop-helix motif.

Binds to FHY1 and FHL. Forms PHYA/FHY1/HFR1 complex. Homodimer and heterodimer with PIF3. Do not interact alone with either phytochrome A (phyA) or B (phyB), but REP1/PIF3 complex binds to phyA and phyB, preferentially to the Pfr forms. Forms non-functional heterodimer with PRE6, causing liberation of PIF4 from the transcriptionally inactive complex HFR1-PIF4. Repressed when bound to PRE1, PRE2 and PRE4. Mainly expressed in fruits and flowers and, to a lower extent, in leaves, stems, seedlings and roots.

Its subcellular location is the nucleus. Atypical bHLH transcription factor that regulates photomorphogenesis through modulation of phytochrome (e.g. PHYA) and cryptochrome signalings. Suppresses the transcriptional regulation activity of PIF4 by forming non-DNA-binding heterodimer. The sequence is that of Transcription factor HFR1 from Arabidopsis thaliana (Mouse-ear cress).